A 499-amino-acid chain; its full sequence is uncharacterized protein (499 aa).

2 disordered regions span residues 76-118 (QATA…RLSP) and 208-268 (DFET…DWAN). The span at 87 to 104 (DPEKQTGKSRYHPSEEIR) shows a compositional bias: basic and acidic residues. A compositionally biased stretch (acidic residues) spans 208 to 263 (DFETEDDESGDDDSEDTGEDEDEEEWVAILEDEDEDDDDDDDDDEDDDDSDSDESL). Ser355 bears the Phosphoserine mark. The interval 478–499 (AEGQIRKLLFPKTNQSTQPKPK) is disordered. Residues 489–499 (KTNQSTQPKPK) are compositionally biased toward polar residues.

This is an uncharacterized protein from Arabidopsis thaliana (Mouse-ear cress).